A 1180-amino-acid chain; its full sequence is Chitin synthase 6 (1180 aa).

2 helical membrane passes run 108-128 (FTIC…IIAF) and 374-394 (LLLA…IAAL). A glycan (N-linked (GlcNAc...) asparagine) is linked at Asn737. 3 helical membrane-spanning segments follow: residues 762 to 782 (FIVF…VYLV), 795 to 815 (IPYI…ILFL), and 822 to 842 (YIGW…FLPI). Positions 1118-1175 (DPTDEEIKSAVQTYLANQPSLMNVTKRSVREALVAAFPNAELSYKKSMINKAIDDTLS) constitute a DEK-C domain.

The protein belongs to the chitin synthase family. Class V subfamily.

It localises to the cell membrane. The protein localises to the cytoplasmic vesicle membrane. The enzyme catalyses [(1-&gt;4)-N-acetyl-beta-D-glucosaminyl](n) + UDP-N-acetyl-alpha-D-glucosamine = [(1-&gt;4)-N-acetyl-beta-D-glucosaminyl](n+1) + UDP + H(+). Polymerizes chitin, a structural polymer of the cell wall and septum, by transferring the sugar moiety of UDP-GlcNAc to the non-reducing end of the growing chitin polymer. Plays a crucial role during infection and allows the fungus to overcome the resistance of the plant that checks growth of the pathogen and eventually eliminates it. The chain is Chitin synthase 6 from Mycosarcoma maydis (Corn smut fungus).